Here is a 272-residue protein sequence, read N- to C-terminus: Putative phosphoenolpyruvate synthase regulatory protein (272 aa).

Residue 152–159 (GVSRCGKT) participates in ADP binding.

Belongs to the pyruvate, phosphate/water dikinase regulatory protein family. PSRP subfamily.

It carries out the reaction [pyruvate, water dikinase] + ADP = [pyruvate, water dikinase]-phosphate + AMP + H(+). The catalysed reaction is [pyruvate, water dikinase]-phosphate + phosphate + H(+) = [pyruvate, water dikinase] + diphosphate. Functionally, bifunctional serine/threonine kinase and phosphorylase involved in the regulation of the phosphoenolpyruvate synthase (PEPS) by catalyzing its phosphorylation/dephosphorylation. The sequence is that of Putative phosphoenolpyruvate synthase regulatory protein from Pseudomonas fluorescens (strain SBW25).